Consider the following 94-residue polypeptide: Co-chaperonin GroES (94 aa).

The protein belongs to the GroES chaperonin family. In terms of assembly, heptamer of 7 subunits arranged in a ring. Interacts with the chaperonin GroEL.

The protein localises to the cytoplasm. Its function is as follows. Together with the chaperonin GroEL, plays an essential role in assisting protein folding. The GroEL-GroES system forms a nano-cage that allows encapsulation of the non-native substrate proteins and provides a physical environment optimized to promote and accelerate protein folding. GroES binds to the apical surface of the GroEL ring, thereby capping the opening of the GroEL channel. This is Co-chaperonin GroES from Geobacillus sp. (strain WCH70).